The following is a 320-amino-acid chain: Ferrochelatase (320 aa).

The Fe cation site is built by His-194 and Glu-275.

The protein belongs to the ferrochelatase family.

The protein localises to the cytoplasm. It catalyses the reaction heme b + 2 H(+) = protoporphyrin IX + Fe(2+). It functions in the pathway porphyrin-containing compound metabolism; protoheme biosynthesis; protoheme from protoporphyrin-IX: step 1/1. Catalyzes the ferrous insertion into protoporphyrin IX. This is Ferrochelatase from Klebsiella pneumoniae (strain 342).